The sequence spans 285 residues: Xanthoxin dehydrogenase (285 aa).

At Ser2 the chain carries N-acetylserine.

It belongs to the short-chain dehydrogenases/reductases (SDR) family. Predominantly in roots and stems, and at lower levels in leaves and seeds.

Its subcellular location is the cytoplasm. It catalyses the reaction 2-cis,4-trans-xanthoxin + NAD(+) = 2-cis-(+)-abscisic aldehyde + NADH + H(+). The enzyme catalyses 2-trans,4-trans-xanthoxin + NAD(+) = 2-trans-(+)-abscisic aldehyde + NADH + H(+). Involved in the biosynthesis of abscisic acid. Catalyzes the conversion of xanthoxin to abscisic aldehyde. The protein is Xanthoxin dehydrogenase of Arabidopsis thaliana (Mouse-ear cress).